Here is a 223-residue protein sequence, read N- to C-terminus: Voltage-dependent calcium channel gamma-1 subunit (223 aa).

The Cytoplasmic portion of the chain corresponds to 1–10 (MSQTKTLKVR). Residues 11–29 (VALLCILVGIVLALVAVVT) traverse the membrane as a helical segment. The Extracellular segment spans residues 30-109 (DHWAVLSPHV…TQKEYSISAA (80 aa)). N43 and N80 each carry an N-linked (GlcNAc...) asparagine glycan. The cysteines at positions 57 and 81 are disulfide-linked. The helical transmembrane segment at 110 to 130 (AIAIFSLGFIIVGTLCALLSF) threads the bilayer. Topologically, residues 131 to 135 (RKKRD) are cytoplasmic. A helical membrane pass occupies residues 136–156 (YLLRPASMFYIFAGLCLSVSA). Over 157–180 (EVMRQSVQRMVDSEHTAWIAHSLA) the chain is Extracellular. The helical transmembrane segment at 181 to 205 (WSFICACVAAALLLVGGLALLLLAL) threads the bilayer. Residues 206-223 (PRMPRDPWESCMDAEPEH) are Cytoplasmic-facing.

Belongs to the PMP-22/EMP/MP20 family. CACNG subfamily. In terms of assembly, component of a calcium channel complex consisting of a pore-forming alpha subunit (CACNA1S) and the ancillary subunits CACNB1 or CACNB2, CACNG1 and CACNA2D1. The channel complex contains alpha, beta, gamma and delta subunits in a 1:1:1:1 ratio, i.e. it contains either CACNB1 or CACNB2. N-glycosylated.

It localises to the cell membrane. The protein localises to the sarcolemma. Regulatory subunit of the voltage-gated calcium channel that gives rise to L-type calcium currents in skeletal muscle. Regulates channel inactivation kinetics. In Bos taurus (Bovine), this protein is Voltage-dependent calcium channel gamma-1 subunit (CACNG1).